The sequence spans 420 residues: Probable endo-beta-1,4-glucanase celB (420 aa).

Residues 1 to 18 (MLRKLTPLALALLPLVAG) form the signal peptide. A glycan (N-linked (GlcNAc...) asparagine) is linked at Asn-118. Glu-215 serves as the catalytic Nucleophile. The Proton donor role is filled by Glu-220. Residues Asn-234, Asn-293, and Asn-383 are each glycosylated (N-linked (GlcNAc...) asparagine).

It belongs to the glycosyl hydrolase 7 (cellulase C) family.

It is found in the secreted. The catalysed reaction is Endohydrolysis of (1-&gt;4)-beta-D-glucosidic linkages in cellulose, lichenin and cereal beta-D-glucans.. Has endoglucanase activity on substrates containing beta-1,4 glycosidic bonds, like in carboxymethylcellulose (CMC), hydroxyethylcellulose (HEC) and beta-glucan. Involved in the degradation of complex natural cellulosic substrates. The polypeptide is Probable endo-beta-1,4-glucanase celB (celB) (Aspergillus terreus (strain NIH 2624 / FGSC A1156)).